The sequence spans 360 residues: Isopentenyl-diphosphate delta-isomerase (360 aa).

12–13 is a binding site for substrate; the sequence is RK. Residues 69 to 71, Ser-99, and Asn-130 contribute to the FMN site; that span reads SMT. 99–101 provides a ligand contact to substrate; it reads SQR. Residue Gln-164 coordinates substrate. Glu-165 serves as a coordination point for Mg(2+). Residues Lys-196, Thr-226, 277-279, and 298-299 contribute to the FMN site; these read GVR and AK.

It belongs to the IPP isomerase type 2 family. In terms of assembly, homooctamer. Dimer of tetramers. FMN is required as a cofactor. It depends on NADPH as a cofactor. The cofactor is Mg(2+).

The protein localises to the cytoplasm. The catalysed reaction is isopentenyl diphosphate = dimethylallyl diphosphate. Involved in the biosynthesis of isoprenoids. Catalyzes the 1,3-allylic rearrangement of the homoallylic substrate isopentenyl (IPP) to its allylic isomer, dimethylallyl diphosphate (DMAPP). This Halobacterium salinarum (strain ATCC 700922 / JCM 11081 / NRC-1) (Halobacterium halobium) protein is Isopentenyl-diphosphate delta-isomerase.